The primary structure comprises 69 residues: Protein hunchback (69 aa).

3 C2H2-type zinc fingers span residues 1 to 11, 17 to 39, and 45 to 69; these read KHHLEYHLRNH, FKCEKCSYSCVNKSMLNSHLKSH, and YRCANCTYATKYCHSLKLHLRKYSH.

It belongs to the hunchback C2H2-type zinc-finger protein family.

It localises to the nucleus. Gap class segmentation protein that controls development of head structures. The protein is Protein hunchback (hb) of Apis mellifera (Honeybee).